The primary structure comprises 295 residues: Light-independent protochlorophyllide reductase iron-sulfur ATP-binding protein (295 aa).

Residues 39 to 44 (GIGKST) and lysine 68 each bind ATP. Serine 43 provides a ligand contact to Mg(2+). Cysteine 124 and cysteine 158 together coordinate [4Fe-4S] cluster. Residue 209–210 (NR) participates in ATP binding.

This sequence belongs to the NifH/BchL/ChlL family. As to quaternary structure, homodimer. Protochlorophyllide reductase is composed of three subunits; ChlL, ChlN and ChlB. [4Fe-4S] cluster serves as cofactor.

It carries out the reaction chlorophyllide a + oxidized 2[4Fe-4S]-[ferredoxin] + 2 ADP + 2 phosphate = protochlorophyllide a + reduced 2[4Fe-4S]-[ferredoxin] + 2 ATP + 2 H2O. It participates in porphyrin-containing compound metabolism; chlorophyll biosynthesis (light-independent). Functionally, component of the dark-operative protochlorophyllide reductase (DPOR) that uses Mg-ATP and reduced ferredoxin to reduce ring D of protochlorophyllide (Pchlide) to form chlorophyllide a (Chlide). This reaction is light-independent. The L component serves as a unique electron donor to the NB-component of the complex, and binds Mg-ATP. The polypeptide is Light-independent protochlorophyllide reductase iron-sulfur ATP-binding protein (Prochlorococcus marinus (strain MIT 9312)).